Consider the following 84-residue polypeptide: Toxin To5 (84 aa).

The signal sequence occupies residues 1-19 (MKAIIFFIGCLMLIDLVAG). In terms of domain architecture, LCN-type CS-alpha/beta spans 21-82 (RSGYPVTQKG…IWGSYPNNCG (62 aa)). 4 cysteine pairs are disulfide-bonded: cysteine 31–cysteine 81, cysteine 35–cysteine 57, cysteine 43–cysteine 62, and cysteine 47–cysteine 64. Cysteine 81 is modified (cysteine amide).

As to expression, expressed by the venom gland.

The protein localises to the secreted. Functionally, beta toxins bind voltage-independently at site-4 of sodium channels (Nav) and shift the voltage of activation toward more negative potentials thereby affecting sodium channel activation and promoting spontaneous and repetitive firing. The polypeptide is Toxin To5 (Tityus obscurus (Amazonian scorpion)).